A 616-amino-acid chain; its full sequence is tRNA 5-methylaminomethyl-2-thiouridine biosynthesis bifunctional protein MnmC (616 aa).

The interval 1-232 (MLRTIVPARL…KRHCMSARFA (232 aa)) is tRNA (mnm(5)s(2)U34)-methyltransferase. The tract at residues 249-616 (IGGGVAGAAA…ARFAGNRKTA (368 aa)) is FAD-dependent cmnm(5)s(2)U34 oxidoreductase.

The protein in the N-terminal section; belongs to the methyltransferase superfamily. tRNA (mnm(5)s(2)U34)-methyltransferase family. It in the C-terminal section; belongs to the DAO family. FAD serves as cofactor.

It is found in the cytoplasm. It carries out the reaction 5-aminomethyl-2-thiouridine(34) in tRNA + S-adenosyl-L-methionine = 5-methylaminomethyl-2-thiouridine(34) in tRNA + S-adenosyl-L-homocysteine + H(+). Catalyzes the last two steps in the biosynthesis of 5-methylaminomethyl-2-thiouridine (mnm(5)s(2)U) at the wobble position (U34) in tRNA. Catalyzes the FAD-dependent demodification of cmnm(5)s(2)U34 to nm(5)s(2)U34, followed by the transfer of a methyl group from S-adenosyl-L-methionine to nm(5)s(2)U34, to form mnm(5)s(2)U34. In Thiobacillus denitrificans (strain ATCC 25259 / T1), this protein is tRNA 5-methylaminomethyl-2-thiouridine biosynthesis bifunctional protein MnmC.